The sequence spans 288 residues: ATP phosphoribosyltransferase (288 aa).

Belongs to the ATP phosphoribosyltransferase family. Long subfamily. The cofactor is Mg(2+).

It localises to the cytoplasm. The enzyme catalyses 1-(5-phospho-beta-D-ribosyl)-ATP + diphosphate = 5-phospho-alpha-D-ribose 1-diphosphate + ATP. The protein operates within amino-acid biosynthesis; L-histidine biosynthesis; L-histidine from 5-phospho-alpha-D-ribose 1-diphosphate: step 1/9. With respect to regulation, feedback inhibited by histidine. Catalyzes the condensation of ATP and 5-phosphoribose 1-diphosphate to form N'-(5'-phosphoribosyl)-ATP (PR-ATP). Has a crucial role in the pathway because the rate of histidine biosynthesis seems to be controlled primarily by regulation of HisG enzymatic activity. This is ATP phosphoribosyltransferase from Methanococcus maripaludis (strain C6 / ATCC BAA-1332).